We begin with the raw amino-acid sequence, 881 residues long: Beta-mannosidase (881 aa).

The first 18 residues, 1–18 (MHLHLLFLLALCGAGCMA), serve as a signal peptide directing secretion. N-linked (GlcNAc...) asparagine glycosylation is found at Asn35, Asn77, Asn89, and Asn113. Cysteines 167 and 176 form a disulfide. 190–192 (WDW) contacts substrate. 3 N-linked (GlcNAc...) asparagine glycosylation sites follow: Asn226, Asn297, and Asn302. Asn456 is a binding site for substrate. Glu457 acts as the Proton donor in catalysis. 3 cysteine pairs are disulfide-bonded: Cys540-Cys629, Cys732-Cys761, and Cys764-Cys769. Glu554 acts as the Nucleophile in catalysis. Asn803 is a glycosylation site (N-linked (GlcNAc...) asparagine).

It belongs to the glycosyl hydrolase 2 family. As to quaternary structure, monomer.

It is found in the lysosome. It carries out the reaction Hydrolysis of terminal, non-reducing beta-D-mannose residues in beta-D-mannosides.. It participates in glycan metabolism; N-glycan degradation. Functionally, exoglycosidase that cleaves the single beta-linked mannose residue from the non-reducing end of all N-linked glycoprotein oligosaccharides. This chain is Beta-mannosidase, found in Rattus norvegicus (Rat).